The sequence spans 201 residues: MSRYRGPRFKKIRRLGALPGLTSKRPRPGSDLRNQSRSGKRSQYRIRLEEKQKLRFHYGLTERQLLRYVRIAGKAKGSTGQVLLQLLEMRLDNILFRLGMASTIPGARQLVNHRHILVNGRIVDIPSYRCKPRDIITTRGEQRSRALIQNYIDSSPHEELAKHLTFHSSQYKGLVNQIIDSKWIGLKINELLVVEYYSRQT.

The segment at 15-43 is disordered; sequence LGALPGLTSKRPRPGSDLRNQSRSGKRSQ. Residues 89 to 150 enclose the S4 RNA-binding domain; it reads MRLDNILFRL…EQRSRALIQN (62 aa).

The protein belongs to the universal ribosomal protein uS4 family. In terms of assembly, part of the 30S ribosomal subunit. Contacts protein S5. The interaction surface between S4 and S5 is involved in control of translational fidelity.

The protein localises to the plastid. Its subcellular location is the chloroplast. Functionally, one of the primary rRNA binding proteins, it binds directly to 16S rRNA where it nucleates assembly of the body of the 30S subunit. Its function is as follows. With S5 and S12 plays an important role in translational accuracy. In Liriodendron tulipifera (Tuliptree), this protein is Small ribosomal subunit protein uS4c (rps4).